A 194-amino-acid polypeptide reads, in one-letter code: Recombination protein RecR (194 aa).

Residues 55 to 70 (CRECGNLAEGELCPIC) form a C4-type zinc finger. One can recognise a Toprim domain in the interval 78–171 (SLLAVVESVA…RVTRPAYGLP (94 aa)).

It belongs to the RecR family.

Its function is as follows. May play a role in DNA repair. It seems to be involved in an RecBC-independent recombinational process of DNA repair. It may act with RecF and RecO. The polypeptide is Recombination protein RecR (Thermus thermophilus (strain ATCC 27634 / DSM 579 / HB8)).